Here is a 219-residue protein sequence, read N- to C-terminus: Ribose-5-phosphate isomerase A (219 aa).

Substrate contacts are provided by residues 28–31, 81–84, and 94–97; these read TGST, DGAD, and KGGG. E103 acts as the Proton acceptor in catalysis. K121 provides a ligand contact to substrate.

This sequence belongs to the ribose 5-phosphate isomerase family. Homodimer.

It carries out the reaction aldehydo-D-ribose 5-phosphate = D-ribulose 5-phosphate. The protein operates within carbohydrate degradation; pentose phosphate pathway; D-ribose 5-phosphate from D-ribulose 5-phosphate (non-oxidative stage): step 1/1. Catalyzes the reversible conversion of ribose-5-phosphate to ribulose 5-phosphate. The sequence is that of Ribose-5-phosphate isomerase A from Photorhabdus laumondii subsp. laumondii (strain DSM 15139 / CIP 105565 / TT01) (Photorhabdus luminescens subsp. laumondii).